Reading from the N-terminus, the 335-residue chain is Methionine import ATP-binding protein MetN (335 aa).

Residues Ile2–Val241 enclose the ABC transporter domain. Gly38–Ser45 is a binding site for ATP.

This sequence belongs to the ABC transporter superfamily. Methionine importer (TC 3.A.1.24) family. As to quaternary structure, the complex is composed of two ATP-binding proteins (MetN), two transmembrane proteins (MetI) and a solute-binding protein (MetQ).

The protein resides in the cell inner membrane. The enzyme catalyses L-methionine(out) + ATP + H2O = L-methionine(in) + ADP + phosphate + H(+). It carries out the reaction D-methionine(out) + ATP + H2O = D-methionine(in) + ADP + phosphate + H(+). Part of the ABC transporter complex MetNIQ involved in methionine import. Responsible for energy coupling to the transport system. This chain is Methionine import ATP-binding protein MetN, found in Xylella fastidiosa (strain Temecula1 / ATCC 700964).